The following is a 207-amino-acid chain: MNAKSPILVLIAGASGSGKTTFANEIVARIPQNTTSVIICQDSYYISNSQLNKNERRLINYDHPSSFEWDLMREQLSDIKKRKKIKVPIYDYKTEIRLDKTIDISDVDVIVFEGIYAIYDDVINQIADLKVFIETPKDECLIRRILRDVNERNRSFESVITQWRSTVSPMYDQFVEPSKKNANVSVLWNEHNRVALHLINKWINNIH.

13–20 (GASGSGKT) is an ATP binding site.

The protein belongs to the uridine kinase family.

The protein resides in the cytoplasm. The enzyme catalyses uridine + ATP = UMP + ADP + H(+). The catalysed reaction is cytidine + ATP = CMP + ADP + H(+). It participates in pyrimidine metabolism; CTP biosynthesis via salvage pathway; CTP from cytidine: step 1/3. It functions in the pathway pyrimidine metabolism; UMP biosynthesis via salvage pathway; UMP from uridine: step 1/1. The chain is Uridine kinase from Ureaplasma urealyticum serovar 10 (strain ATCC 33699 / Western).